The sequence spans 239 residues: Mannose-binding protein A (239 aa).

Residues 1-18 form the signal peptide; it reads MLLLPLLPVLLCVVSVSS. Positions 35 to 88 are disordered; it reads ACGRDGRDGPKGEKGEPGQGLRGLQGPPGKLGPPGSVGSPGSPGPKGQKGDHGD. A Collagen-like domain is found at 37–89; sequence GRDGRDGPKGEKGEPGQGLRGLQGPPGKLGPPGSVGSPGSPGPKGQKGDHGDN. Residues 38 to 50 are compositionally biased toward basic and acidic residues; that stretch reads RDGRDGPKGEKGE. Pro44 is modified (4-hydroxyproline). A 5-hydroxylysine mark is found at Lys45 and Lys48. 2 O-linked (Gal...) hydroxylysine glycosylation sites follow: Lys45 and Lys48. Residues Pro51, Pro62, Pro68, Pro74, and Pro79 each carry the 4-hydroxyproline modification. Positions 58 to 74 are enriched in low complexity; that stretch reads LQGPPGKLGPPGSVGSP. 5-hydroxylysine occurs at positions 80 and 83. Residues Lys80 and Lys83 are each glycosylated (O-linked (Gal...) hydroxylysine). Residues 144–239 form the C-type lectin domain; that stretch reads SLCTELQGTV…SFKAVCEFPA (96 aa). 2 cysteine pairs are disulfide-bonded: Cys146–Cys235 and Cys213–Cys227. Positions 179, 183, 203, 205, 211, 212, 223, and 224 each coordinate Ca(2+). Residues 203 to 211 are calcium-dependent carbohydrate binding; the sequence is EPNNHGSGE.

In terms of assembly, homotrimer. Forms higher oligomeric complexes formed by the association of two, three or more homotrimers. Oligomerization occurs in the endoplasmic reticulum. Interacts with MASP1 and MASP2. Hydroxylated on lysine and proline residues within the collagen-like domain. In terms of processing, O-glycosylated. O-linked glycans on hydroxylysine residues consist of Glc-Gal disaccharides bound to the oxygen atom of post-translationally added hydroxyl groups. In terms of tissue distribution, detected in liver and blood serum (at protein level). Detected in liver.

Its subcellular location is the secreted. In terms of biological role, calcium-dependent lectin. Plays a role in the innate immune response by binding mannose, fucose and N-acetylglucosamine moieties on different microorganisms and mediating activation of the lectin complement pathway. Binds to late apoptotic cells, as well as to apoptotic blebs and to necrotic cells, but not to early apoptotic cells, facilitating their uptake by macrophages. This chain is Mannose-binding protein A (Mbl1), found in Mus musculus (Mouse).